The primary structure comprises 417 residues: Phosphoglycerate kinase 1 (417 aa).

Ser2 carries the N-acetylserine modification. 2 positions are modified to phosphoserine: Ser2 and Ser4. Lys6 is subject to N6-succinyllysine. Lys11 is subject to N6-acetyllysine. Positions 23, 24, 25, 26, 38, and 39 each coordinate (2R)-3-phosphoglycerate. A mitochondrial targeting region exposed following cis-trans isomerization by PIN1 and recognized by the TOM complex for mitochondrial translocation of the protein region spans residues Gln38 to Ala43. Position 48 is an N6-acetyllysine; alternate (Lys48). Lys48 is modified (N6-succinyllysine; alternate). Residues Ser62, His63, Gly65, and Arg66 each contribute to the (2R)-3-phosphoglycerate site. N6-acetyllysine is present on Lys75. Tyr76 carries the phosphotyrosine modification. 2 positions are modified to N6-acetyllysine: Lys86 and Lys91. Residue Lys97 is modified to N6-acetyllysine; alternate. At Lys97 the chain carries N6-(2-hydroxyisobutyryl)lysine; alternate. (2R)-3-phosphoglycerate-binding residues include Leu122 and Arg123. Lys131 is modified (N6-acetyllysine; alternate). Lys131 carries the post-translational modification N6-malonyllysine; alternate. At Lys146 the chain carries N6-acetyllysine. His170 and Arg171 together coordinate (2R)-3-phosphoglycerate. Lys191 carries the post-translational modification N6-succinyllysine. Tyr196 bears the Phosphotyrosine mark. Lys199 carries the post-translational modification N6-acetyllysine. Position 203 is a phosphoserine (Ser203). Residue Gly214 coordinates ADP. A CDP-binding site is contributed by Gly214. The AMP site is built by Ala215 and Lys216. Ala215 is a binding site for ATP. Ala215 provides a ligand contact to Mg(2+). Residue Lys216 is modified to N6-(2-hydroxyisobutyryl)lysine. The Mg(2+) site is built by Ala218 and Asp219. Asp219 is a binding site for CDP. Lys220 serves as a coordination point for AMP. Lys220 contacts ATP. The residue at position 220 (Lys220) is an N6-(2-hydroxyisobutyryl)lysine. Gly238 is an ADP binding site. Gly238 contributes to the CDP binding site. Gly239 is an AMP binding site. Gly239 contributes to the ATP binding site. Residues Lys267 and Lys291 each carry the N6-acetyllysine modification. Gly313 is a binding site for AMP. Residue Gly313 participates in ATP binding. Lys323 carries the N6-(2-hydroxyisobutyryl)lysine modification. Positions 338, 340, and 343 each coordinate CDP. ADP is bound at residue Phe343. Residue Glu344 participates in AMP binding. Glu344 serves as a coordination point for ATP. At Lys361 the chain carries N6-acetyllysine. ATP contacts are provided by Asp375 and Thr376. Asp375 serves as a coordination point for Mg(2+).

This sequence belongs to the phosphoglycerate kinase family. In terms of assembly, monomer. Interacts with kinase MAPK1/ERK2; the interaction is direct, occurs under hypoxic conditions, and promotes its interaction with PIN1. Interacts with peptidyl-prolyl cis-trans isomerase PIN1; the interaction is direct, occurs under hypoxic conditions, and targets the protein to the mitochondrion by promoting interactions with the TOM complex. Interacts with mitochondrial circRNA mcPGK1 (via its 2nd stem-loop); the interaction is direct and targets the protein to the mitochondrion by promoting interactions with the TOM complex. Interacts with pyruvate dehydrogenase kinase PDK1; the interaction is direct, occurs under hypoxic conditions and leads to PDK1-mediated inhibition of pyruvate dehydrogenase complex activity. Mg(2+) serves as cofactor. In terms of processing, phosphorylated at Ser-203 by MAPK1/ERK2 under hypoxic conditions, which promotes its mitochondrial targeting.

It localises to the cytoplasm. The protein localises to the cytosol. The protein resides in the mitochondrion matrix. It carries out the reaction (2R)-3-phosphoglycerate + ATP = (2R)-3-phospho-glyceroyl phosphate + ADP. The enzyme catalyses L-seryl-[protein] + ATP = O-phospho-L-seryl-[protein] + ADP + H(+). It participates in carbohydrate degradation; glycolysis; pyruvate from D-glyceraldehyde 3-phosphate: step 2/5. Its function is as follows. Catalyzes one of the two ATP producing reactions in the glycolytic pathway via the reversible conversion of 1,3-diphosphoglycerate to 3-phosphoglycerate. Both L- and D- forms of purine and pyrimidine nucleotides can be used as substrates, but the activity is much lower on pyrimidines. In addition to its role as a glycolytic enzyme, it seems that PGK-1 acts as a polymerase alpha cofactor protein (primer recognition protein). Acts as a protein kinase when localized to the mitochondrion where it phosphorylates pyruvate dehydrogenase kinase PDK1 to inhibit pyruvate dehydrogenase complex activity and suppress the formation of acetyl-coenzyme A from pyruvate, and consequently inhibit oxidative phosphorylation and promote glycolysis. May play a role in sperm motility. This Sus scrofa (Pig) protein is Phosphoglycerate kinase 1 (PGK1).